Consider the following 430-residue polypeptide: Mitochondrial distribution and morphology protein 12 (430 aa).

The region spanning 1-430 (MSIDIDWERA…VYPSFWTFLI (430 aa)) is the SMP-LTD domain. 3 disordered regions span residues 61–117 (DLSD…YESN), 177–276 (TPLG…RMRE), and 352–377 (MGPE…KPSS). Acidic residues predominate over residues 69–82 (FYEDDDENFSDSSE). Residues 85–96 (SPTREPVDRYGN) show a composition bias toward basic and acidic residues. Polar residues-rich tracts occupy residues 211-233 (SAQS…SMSI) and 241-251 (ASQGMPNNQGQ). The segment covering 265–276 (PLDDTPPRRMRE) has biased composition (basic and acidic residues).

This sequence belongs to the MDM12 family. As to quaternary structure, component of the ER-mitochondria encounter structure (ERMES) or MDM complex, composed of MMM1, MDM10, MDM12 and MDM34. An MMM1 homodimer associates with one molecule of MDM12 on each side in a pairwise head-to-tail manner, and the SMP-LTD domains of MMM1 and MDM12 generate a continuous hydrophobic tunnel for phospholipid trafficking.

The protein resides in the mitochondrion outer membrane. Its subcellular location is the endoplasmic reticulum membrane. In terms of biological role, component of the ERMES/MDM complex, which serves as a molecular tether to connect the endoplasmic reticulum (ER) and mitochondria. Components of this complex are involved in the control of mitochondrial shape and protein biogenesis, and function in nonvesicular lipid trafficking between the ER and mitochondria. MDM12 is required for the interaction of the ER-resident membrane protein MMM1 and the outer mitochondrial membrane-resident beta-barrel protein MDM10. The MDM12-MMM1 subcomplex functions in the major beta-barrel assembly pathway that is responsible for biogenesis of all mitochondrial outer membrane beta-barrel proteins, and acts in a late step after the SAM complex. The MDM10-MDM12-MMM1 subcomplex further acts in the TOM40-specific pathway after the action of the MDM12-MMM1 complex. Essential for establishing and maintaining the structure of mitochondria and maintenance of mtDNA nucleoids. This is Mitochondrial distribution and morphology protein 12 from Ajellomyces capsulatus (strain G186AR / H82 / ATCC MYA-2454 / RMSCC 2432) (Darling's disease fungus).